The sequence spans 461 residues: Cysteine--tRNA ligase (461 aa).

C31 is a binding site for Zn(2+). A 'HIGH' region motif is present at residues 33–43 (PTVYDFAHIGN). Residues C219, H244, and E248 each contribute to the Zn(2+) site. A 'KMSKS' region motif is present at residues 277-281 (KMSKS). K280 is a binding site for ATP. The span at 436-452 (SEKGIQLKDGKDKETGE) shows a compositional bias: basic and acidic residues. Residues 436–461 (SEKGIQLKDGKDKETGERTTTWELKR) form a disordered region.

The protein belongs to the class-I aminoacyl-tRNA synthetase family. Monomer. Zn(2+) is required as a cofactor.

Its subcellular location is the cytoplasm. It carries out the reaction tRNA(Cys) + L-cysteine + ATP = L-cysteinyl-tRNA(Cys) + AMP + diphosphate. The sequence is that of Cysteine--tRNA ligase from Agrobacterium fabrum (strain C58 / ATCC 33970) (Agrobacterium tumefaciens (strain C58)).